Here is a 567-residue protein sequence, read N- to C-terminus: TGF-beta receptor type-2 (567 aa).

A signal peptide spans 1–23 (MGRGLLRGLWPLHIVLWTRIAST). At 24-166 (IPPHVPKSVN…SPDLLLVIIQ (143 aa)) the chain is on the extracellular side. Cystine bridges form between Cys51–Cys84, Cys54–Cys71, Cys61–Cys67, Cys77–Cys101, Cys121–Cys136, and Cys138–Cys143. N-linked (GlcNAc...) asparagine glycosylation is found at Asn70 and Asn94. A helical transmembrane segment spans residues 167–187 (VTGVSLLPPLGIAIAVIAIFY). The Cytoplasmic segment spans residues 188–567 (CYRVHRQQKL…PEDGSLNTTK (380 aa)). In terms of domain architecture, Protein kinase spans 244 to 546 (IELDTLVGKG…RFSELEHPDR (303 aa)). ATP contacts are provided by residues 250 to 258 (VGKGRFAEV) and Lys277. The Proton acceptor role is filled by Asp379. Phosphoserine occurs at positions 409, 548, and 553. Residues 546-567 (RLSGRSCSQEKIPEDGSLNTTK) form a disordered region.

Belongs to the protein kinase superfamily. TKL Ser/Thr protein kinase family. TGFB receptor subfamily. As to quaternary structure, homodimer. Heterohexamer; TGFB1, TGFB2 and TGFB3 homodimeric ligands assemble a functional receptor composed of two TGFBR1 and TGFBR2 heterodimers to form a ligand-receptor heterohexamer. The respective affinity of TGFRB1 and TGFRB2 for the ligands may modulate the kinetics of assembly of the receptor and may explain the different biological activities of TGFB1, TGFB2 and TGFB3. Component of a complex composed of TSC22D1 (via N-terminus), TGFBR1 and TGFBR2; the interaction between TSC22D1 and TGFBR1 is inhibited by SMAD7 and promoted by TGFB1. Interacts with DAXX. Interacts with DYNLT4. Interacts with ZFYVE9; ZFYVE9 recruits SMAD2 and SMAD3 to the TGF-beta receptor. Interacts with and is activated by SCUBE3; this interaction does not affect TGFB1-binding to TGFBR2. Interacts with VPS39; this interaction is independent of the receptor kinase activity and of the presence of TGF-beta. Interacts with CLU. Mg(2+) is required as a cofactor. Mn(2+) serves as cofactor. In terms of processing, phosphorylated on a Ser/Thr residue in the cytoplasmic domain.

It is found in the cell membrane. The protein localises to the membrane raft. The catalysed reaction is L-threonyl-[receptor-protein] + ATP = O-phospho-L-threonyl-[receptor-protein] + ADP + H(+). The enzyme catalyses L-seryl-[receptor-protein] + ATP = O-phospho-L-seryl-[receptor-protein] + ADP + H(+). In terms of biological role, transmembrane serine/threonine kinase forming with the TGF-beta type I serine/threonine kinase receptor, TGFBR1, the non-promiscuous receptor for the TGF-beta cytokines TGFB1, TGFB2 and TGFB3. Transduces the TGFB1, TGFB2 and TGFB3 signal from the cell surface to the cytoplasm and is thus regulating a plethora of physiological and pathological processes including cell cycle arrest in epithelial and hematopoietic cells, control of mesenchymal cell proliferation and differentiation, wound healing, extracellular matrix production, immunosuppression and carcinogenesis. The formation of the receptor complex composed of 2 TGFBR1 and 2 TGFBR2 molecules symmetrically bound to the cytokine dimer results in the phosphorylation and the activation of TGFRB1 by the constitutively active TGFBR2. Activated TGFBR1 phosphorylates SMAD2 which dissociates from the receptor and interacts with SMAD4. The SMAD2-SMAD4 complex is subsequently translocated to the nucleus where it modulates the transcription of the TGF-beta-regulated genes. This constitutes the canonical SMAD-dependent TGF-beta signaling cascade. Also involved in non-canonical, SMAD-independent TGF-beta signaling pathways. The chain is TGF-beta receptor type-2 (Tgfbr2) from Rattus norvegicus (Rat).